We begin with the raw amino-acid sequence, 353 residues long: Mas-related G-protein coupled receptor member B5 (353 aa).

The Extracellular segment spans residues 1–67; the sequence is MPDSPTESYG…SCIITFNTLN (67 aa). N-linked (GlcNAc...) asparagine glycosylation is found at N26 and N44. Residues 68–90 traverse the membrane as a helical segment; sequence FLTATISVVGTAGNATVLRLLGF. The Cytoplasmic segment spans residues 91–96; the sequence is HMHRYA. A helical transmembrane segment spans residues 97–117; that stretch reads FSVYVFNLAGADFLYLCTQTV. Residues 118-131 lie on the Extracellular side of the membrane; the sequence is YSLECVLQFDNSYF. A helical membrane pass occupies residues 132 to 152; the sequence is YFLLTILMFAYLAALCMIPAI. The Cytoplasmic portion of the chain corresponds to 153-180; the sequence is STERCLSVTWPIWYHCQRPRHTSATVCA. A helical transmembrane segment spans residues 181 to 201; it reads LFWAFSLLLRLLLGQGCGFLF. The Extracellular portion of the chain corresponds to 202-213; the sequence is GKYDYYFCRYCS. A helical transmembrane segment spans residues 214–234; the sequence is FITTAFLIVLFVVPFVSSLAM. Over 235-253 the chain is Cytoplasmic; the sequence is LTKIICGSHRIPVTRFYVT. The helical transmembrane segment at 254–274 threads the bilayer; the sequence is IAVTVLVFTFFGLPVGIISLL. Over 275-289 the chain is Extracellular; sequence LPRIVVFRGVFYIYK. A helical membrane pass occupies residues 290 to 310; the sequence is IVTFLYSVNCCANPIIYFLIG. At 311 to 353 the chain is on the cytoplasmic side; the sequence is SIRHHRLQRQSLKLLLQRAMQDTPEEEGGVKGPSQKSNELEIV. Residues 333-353 form a disordered region; the sequence is TPEEEGGVKGPSQKSNELEIV.

It belongs to the G-protein coupled receptor 1 family. Mas subfamily. As to expression, expressed strongly in newborn dorsal root ganglia, adult dorsal root ganglia and trigeminal ganlia.

Its subcellular location is the membrane. Orphan receptor. Probably involved in the function of nociceptive neurons. May regulate nociceptor function and/or development, including the sensation or modulation of pain. The chain is Mas-related G-protein coupled receptor member B5 (Mrgprb5) from Rattus norvegicus (Rat).